A 216-amino-acid polypeptide reads, in one-letter code: MRLILLGPPGAGKGTQAQRIVDKYGIPQLSTGDMLRAAVSAQTEVGKRAKAVMDAGKLVSDDIVIAIVSERIDQDDCSNGFILDGFPRTLIQADATEKMLAVKGLELSAVVEIRVEDEILADRIAGRYTCANCGTGYHDENLKPKVEGVCDKCGSTHFKRRPDDNRDTVKTRLQAYYKETSPLIGYYYAKGKLHSVDGMAEIDQVTAEIETVLSGL.

Residue 10-15 (GAGKGT) participates in ATP binding. The tract at residues 30–59 (STGDMLRAAVSAQTEVGKRAKAVMDAGKLV) is NMP. Residues T31, R36, 57 to 59 (KLV), 85 to 88 (GFPR), and Q92 contribute to the AMP site. Residues 126–163 (GRYTCANCGTGYHDENLKPKVEGVCDKCGSTHFKRRPD) form an LID region. An ATP-binding site is contributed by R127. The Zn(2+) site is built by C130, C133, C150, and C153. Residues R160 and R172 each coordinate AMP. A200 contributes to the ATP binding site.

This sequence belongs to the adenylate kinase family. In terms of assembly, monomer.

It localises to the cytoplasm. It catalyses the reaction AMP + ATP = 2 ADP. It functions in the pathway purine metabolism; AMP biosynthesis via salvage pathway; AMP from ADP: step 1/1. Catalyzes the reversible transfer of the terminal phosphate group between ATP and AMP. Plays an important role in cellular energy homeostasis and in adenine nucleotide metabolism. This is Adenylate kinase from Allorhizobium ampelinum (strain ATCC BAA-846 / DSM 112012 / S4) (Agrobacterium vitis (strain S4)).